The following is a 302-amino-acid chain: Sulfate adenylyltransferase subunit 2 (302 aa).

Belongs to the PAPS reductase family. CysD subfamily. As to quaternary structure, heterodimer composed of CysD, the smaller subunit, and CysN.

It catalyses the reaction sulfate + ATP + H(+) = adenosine 5'-phosphosulfate + diphosphate. It functions in the pathway sulfur metabolism; hydrogen sulfide biosynthesis; sulfite from sulfate: step 1/3. Its function is as follows. With CysN forms the ATP sulfurylase (ATPS) that catalyzes the adenylation of sulfate producing adenosine 5'-phosphosulfate (APS) and diphosphate, the first enzymatic step in sulfur assimilation pathway. APS synthesis involves the formation of a high-energy phosphoric-sulfuric acid anhydride bond driven by GTP hydrolysis by CysN coupled to ATP hydrolysis by CysD. The protein is Sulfate adenylyltransferase subunit 2 of Methylococcus capsulatus (strain ATCC 33009 / NCIMB 11132 / Bath).